The chain runs to 842 residues: ATP-binding cassette sub-family B member 6 (842 aa).

The Lumenal segment spans residues 1–26 (MVTVGNYCEAEGPVGPAWMQDGLSPC). Positions 1-205 (MVTVGNYCEA…SGGLFVLGLW (205 aa)) are required for the lysosomal targeting. Residues 1-236 (MVTVGNYCEA…RSQVRSAAQQ (236 aa)) are required for ATPase activity. An N-linked (GlcNAc...) asparagine glycan is attached at Asn-6. Residues Cys-8 and Cys-26 are joined by a disulfide bond. The helical transmembrane segment at 27 to 47 (FFFTLVPSTRMALGTLALVLA) threads the bilayer. Residues 48–72 (LPCRRRERPAGADSLSWGAGPRISP) are Cytoplasmic-facing. The chain crosses the membrane as a helical span at residues 73 to 93 (YVLQLLLATLQAALPLAGLAG). Residues 94–106 (RVGTARGAPLPSY) lie on the Lumenal side of the membrane. Residues 107–127 (LLLASVLESLAGACGLWLLVV) form a helical membrane-spanning segment. Topologically, residues 128–147 (ERSQARQRLAMGIWIKFRHS) are cytoplasmic. A helical membrane pass occupies residues 148 to 168 (PGLLLLWTVAFAAENLALVSW). The Lumenal segment spans residues 169-185 (NSPQWWWARADLGQQVQ). A helical transmembrane segment spans residues 186–206 (FSLWVLRYVVSGGLFVLGLWA). At 207–263 (PGLRPQSYTLQVHEEDQDVERSQVRSAAQQSTWRDFGRKLRLLSGYLWPRGSPALQL) the chain is on the cytoplasmic side. A helical transmembrane segment spans residues 264–284 (VVLICLGLMGLERALNVLVPI). The region spanning 265 to 556 (VLICLGLMGL…FGTYYRMIQT (292 aa)) is the ABC transmembrane type-1 domain. At 285 to 291 (FYRNIVN) the chain is on the lumenal side. A helical transmembrane segment spans residues 292 to 312 (LLTEKAPWNSLAWTVTSYVFL). Residues 313–375 (KFLQGGGTGS…TGEVLRIADR (63 aa)) lie on the Cytoplasmic side of the membrane. The chain crosses the membrane as a helical span at residues 376 to 396 (GTSSVTGLLSYLVFNVIPTLA). Position 397 (Asp-397) is a topological domain, lumenal. The chain crosses the membrane as a helical span at residues 398 to 418 (IIIGIIYFSMFFNAWFGLIVF). Residues 419–499 (LCMSLYLTLT…SSASLVLLNQ (81 aa)) are Cytoplasmic-facing. A helical membrane pass occupies residues 500-520 (TQNLVIGLGLLAGSLLCAYFV). Residues 521-529 (TEQKLQVGD) lie on the Lumenal side of the membrane. The helical transmembrane segment at 530 to 550 (YVLFGTYIIQLYMPLNWFGTY) threads the bilayer. The Cytoplasmic segment spans residues 551 to 842 (YRMIQTNFID…EDTKPQTMER (292 aa)). Residues 590–824 (IEFENVHFSY…GGVYADMWQL (235 aa)) form the ABC transporter domain. Residues Tyr-599 and 623 to 634 (GPSGAGKSTILR) contribute to the ATP site.

This sequence belongs to the ABC transporter superfamily. ABCB family. Heavy Metal importer (TC 3.A.1.210) subfamily. Homodimer. Post-translationally, N-glycosylated. In terms of tissue distribution, widely expressed. High expression is detected in the retinal epithelium. Expressed in mature erythrocytes.

The protein resides in the cell membrane. It localises to the mitochondrion outer membrane. Its subcellular location is the endoplasmic reticulum membrane. The protein localises to the golgi apparatus membrane. It is found in the endosome membrane. The protein resides in the lysosome membrane. It localises to the late endosome membrane. Its subcellular location is the early endosome membrane. The protein localises to the secreted. It is found in the extracellular exosome. The protein resides in the mitochondrion. It localises to the endosome. Its subcellular location is the multivesicular body membrane. The protein localises to the melanosome membrane. The catalysed reaction is heme b(in) + ATP + H2O = heme b(out) + ADP + phosphate + H(+). The enzyme catalyses coproporphyrin III(in) + ATP + H2O = coproporphyrin III(out) + ADP + phosphate + H(+). It carries out the reaction pheophorbide a(in) + ATP + H2O = pheophorbide a(out) + ADP + phosphate + H(+). It catalyses the reaction coproporphyrinogen III(in) + ATP + H2O = coproporphyrinogen III(out) + ADP + phosphate + H(+). The catalysed reaction is protoporphyrin IX(in) + ATP + H2O = protoporphyrin IX(out) + ADP + phosphate + H(+). The enzyme catalyses coproporphyrin I(in) + ATP + H2O = coproporphyrin I(out) + ADP + phosphate + H(+). It carries out the reaction uroporphyrin I(in) + ATP + H2O = uroporphyrin I(out) + ADP + phosphate + H(+). It catalyses the reaction uroporphyrin III(in) + ATP + H2O = uroporphyrin III(out) + ADP + phosphate + H(+). With respect to regulation, ATPase activity is inhibited by MgATP with an IC(50) of 1.03 mM and up-regulated by coporphyrin III&gt; hemin &gt; protoporphyrin IX. ATPase activity for hemin is up-regulated by glutathione. The ATPase activity is impaired by increasing copper concentrations (0-300 uM). The ATPase activity is stimulated in presence of glutathione for increasing copper concentrations (0-300 uM). In terms of biological role, ATP-dependent transporter that catalyzes the transport of a broad-spectrum of porphyrins from the cytoplasm to the extracellular space through the plasma membrane or into the vesicle lumen. May also function as an ATP-dependent importer of porphyrins from the cytoplasm into the mitochondria, in turn may participate in the de novo heme biosynthesis regulation and in the coordination of heme and iron homeostasis during phenylhydrazine stress. May also play a key role in the early steps of melanogenesis producing PMEL amyloid fibrils. In vitro, it confers to cells a resistance to toxic metal such as arsenic and cadmium and against chemotherapeutics agent such as 5-fluorouracil, SN-38 and vincristin. In addition may play a role in the transition metal homeostasis. The polypeptide is ATP-binding cassette sub-family B member 6 (Homo sapiens (Human)).